The primary structure comprises 498 residues: Glycerol kinase (498 aa).

T12 serves as a coordination point for ADP. ATP is bound by residues T12, T13, and S14. T12 lines the sn-glycerol 3-phosphate pocket. R16 contributes to the ADP binding site. The sn-glycerol 3-phosphate site is built by R82, E83, Y134, and D243. Residues R82, E83, Y134, D243, and Q244 each coordinate glycerol. ADP contacts are provided by T265 and G308. Residues T265, G308, Q312, and G409 each contribute to the ATP site. ADP contacts are provided by G409 and N413.

The protein belongs to the FGGY kinase family. Homotetramer and homodimer (in equilibrium).

It carries out the reaction glycerol + ATP = sn-glycerol 3-phosphate + ADP + H(+). The protein operates within polyol metabolism; glycerol degradation via glycerol kinase pathway; sn-glycerol 3-phosphate from glycerol: step 1/1. Activated by phosphorylation and inhibited by fructose 1,6-bisphosphate (FBP). Functionally, key enzyme in the regulation of glycerol uptake and metabolism. Catalyzes the phosphorylation of glycerol to yield sn-glycerol 3-phosphate. This Clostridium botulinum (strain ATCC 19397 / Type A) protein is Glycerol kinase.